Reading from the N-terminus, the 267-residue chain is Integral membrane protein 2C (267 aa).

The residue at position 37 (Thr37) is a Phosphothreonine. A helical; Signal-anchor for type II membrane protein membrane pass occupies residues Val55–Ala75. The 95-residue stretch at Phe136–Leu230 folds into the BRICHOS domain. Residues Cys163 and Cys222 are joined by a disulfide bond. N-linked (GlcNAc...) asparagine glycosylation is present at Asn169.

The protein belongs to the ITM2 family. As to quaternary structure, interacts with BACE1. Interacts with APP. Interacts with STMN2. Type I membrane-bound, as well as soluble, furin has a pre-eminent role in ITM2C proteolytic processing. PCSK7 and PCSK5 may also be involved although to a lesser extent. The soluble form of PCSK7 is incapable of processing ITM2C. Fails to undergo shedding by ADAM10 and intramembrane cleavage by SPPL2B.

The protein localises to the lysosome membrane. The protein resides in the cell membrane. Its function is as follows. Negative regulator of amyloid-beta peptide production. May inhibit the processing of APP by blocking its access to alpha- and beta-secretase. Binding to the beta-secretase-cleaved APP C-terminal fragment is negligible, suggesting that ITM2C is a poor gamma-secretase cleavage inhibitor. May play a role in TNF-induced cell death and neuronal differentiation. The protein is Integral membrane protein 2C (ITM2C) of Pongo abelii (Sumatran orangutan).